The sequence spans 2037 residues: Protein SWOLLEN 1 (2037 aa).

Disordered regions lie at residues 141–179 (VEPGQTSHERSLSKEETVNLQPNPSVDDTPGESSVVKTD), 454–487 (REGGVSKKSDNEGSARTSNLEQSMELPVNANDRD), 504–531 (SVGYVSGGSTSELAESESQSDSIPTDKS), 567–637 (KTSS…KDAV), 686–705 (SLPILGSEAGKDGQEEDNTA), 837–893 (VGSP…SGGK), 1011–1045 (ATPETPLQSRPGKTETPSAGHTNSKESSGTNPMIP), 1148–1197 (KHVQ…ESGP), 1729–1748 (SGETISSSHEGDTPKEKRPR), 1793–1812 (KSTREENKPDPLRMKRTGLQ), and 1841–2037 (EAST…QSKK). A compositionally biased stretch (basic and acidic residues) spans 147–157 (SHERSLSKEET). A compositionally biased stretch (polar residues) spans 158–176 (VNLQPNPSVDDTPGESSVV). Over residues 454–466 (REGGVSKKSDNEG) the composition is skewed to basic and acidic residues. The segment covering 504–514 (SVGYVSGGSTS) has biased composition (low complexity). The span at 515–526 (ELAESESQSDSI) shows a compositional bias: polar residues. The span at 841-852 (STSSLDKTAAKS) shows a compositional bias: low complexity. Residues 853 to 865 (SKAKSERKPRRTS) show a composition bias toward basic residues. 2 stretches are compositionally biased toward polar residues: residues 1025-1041 (ETPSAGHTNSKESSGTN) and 1151-1171 (QSGTSSNVSKVTPTLEPTSTV). A compositionally biased stretch (basic residues) spans 1179 to 1189 (TRVKSRKRKKM). Over residues 1794 to 1805 (STREENKPDPLR) the composition is skewed to basic and acidic residues. Composition is skewed to polar residues over residues 1874–1886 (KTISIEKQTTISR), 1942–1964 (EEQTTSSSHDTGSKNSSSLSTNK), and 2013–2023 (LQTSMMTSKIP). Residues 2028 to 2037 (SKSHLSQSKK) are compositionally biased toward basic residues.

As to quaternary structure, interacts with importin alpha IMPA1 and IMPA2, required for nuclear-localized proteins import. Mainly expressed in seedlings, flower buds and stems, and, to a lower extent, in leaves and siliques.

Its subcellular location is the nucleus. Its function is as follows. Under salt stress, appears to prevent the accumulation of reactive oxygen species (ROS) in roots and required for the maintenance of cell wall integrity (cellulose, pectin and lignin composition) by interacting with importin alpha (e.g. IMPA1 and IMPA2) and binding to the promoter of several ROS- and cell wall-related genes to regulate their expression. Necessary for cells organization in meristems and root elongation zones as well as for root elongation in high salinity, but not upon osmotic stress. In Arabidopsis thaliana (Mouse-ear cress), this protein is Protein SWOLLEN 1.